A 490-amino-acid chain; its full sequence is Actin-related protein 6 (490 aa).

It belongs to the actin family. ARP6 subfamily.

The protein resides in the cytoplasm. The protein localises to the cytoskeleton. The chain is Actin-related protein 6 from Dictyostelium discoideum (Social amoeba).